We begin with the raw amino-acid sequence, 296 residues long: Protoheme IX farnesyltransferase 2 (296 aa).

Transmembrane regions (helical) follow at residues 7 to 27 (LLVA…GGYF), 36 to 56 (PMLL…GCVL), 83 to 103 (LKAA…LLWW), 108 to 128 (LTTA…SLWF), 134 to 154 (YGTL…YCAV), 163 to 183 (ASLL…IAIF), 207 to 227 (IHIV…CLGG), 229 to 249 (AGYG…AIAL), and 265 to 285 (FAFS…DFQV).

It belongs to the UbiA prenyltransferase family. Protoheme IX farnesyltransferase subfamily.

It is found in the cell inner membrane. The enzyme catalyses heme b + (2E,6E)-farnesyl diphosphate + H2O = Fe(II)-heme o + diphosphate. It functions in the pathway porphyrin-containing compound metabolism; heme O biosynthesis; heme O from protoheme: step 1/1. Its function is as follows. Converts heme B (protoheme IX) to heme O by substitution of the vinyl group on carbon 2 of heme B porphyrin ring with a hydroxyethyl farnesyl side group. In Pseudomonas paraeruginosa (strain DSM 24068 / PA7) (Pseudomonas aeruginosa (strain PA7)), this protein is Protoheme IX farnesyltransferase 2.